Reading from the N-terminus, the 458-residue chain is Mannan endo-1,6-alpha-mannosidase DFG5 (458 aa).

An N-terminal signal peptide occupies residues 1–26 (MIVNISAKMILSICFTFLSFFKATHA). Asparagine 89, asparagine 114, asparagine 138, asparagine 208, asparagine 231, asparagine 245, asparagine 270, asparagine 273, and asparagine 417 each carry an N-linked (GlcNAc...) asparagine glycan. Residues 399-418 (PYKEDNGGTSKGDANAGMNS) form a disordered region. The GPI-anchor amidated glycine moiety is linked to residue glycine 437. Positions 438–458 (AAIITAVILSVLTGGAVWMLF) are cleaved as a propeptide — removed in mature form.

It belongs to the glycosyl hydrolase 76 family. N-glycosylated.

The protein resides in the cell membrane. It catalyses the reaction Random hydrolysis of (1-&gt;6)-alpha-D-mannosidic linkages in unbranched (1-&gt;6)-mannans.. Required for normal synthesis of the cell wall. This is Mannan endo-1,6-alpha-mannosidase DFG5 (DFG5) from Saccharomyces cerevisiae (strain ATCC 204508 / S288c) (Baker's yeast).